Here is a 280-residue protein sequence, read N- to C-terminus: UPF0328 protein ECU06_0020/ECU06_1700 (280 aa).

This sequence belongs to the UPF0328 family.

The sequence is that of UPF0328 protein ECU06_0020/ECU06_1700 from Encephalitozoon cuniculi (strain GB-M1) (Microsporidian parasite).